The following is a 25-amino-acid chain: Putative cytochrome c4 (25 aa).

The disordered stretch occupies residues 1–25 (QEDIEAGKQKSATCTACHGQEGNST). Residues C14 and C17 each contribute to the heme site.

Binds 2 heme groups per subunit.

The protein resides in the periplasm. Diheme, high potential cytochrome c believed to be an intermediate electron donor to terminal oxidation systems. The sequence is that of Putative cytochrome c4 from Aliivibrio fischeri (Vibrio fischeri).